We begin with the raw amino-acid sequence, 257 residues long: MIQNKLQNFVDTLPISPEKSCSYYPERLSQIQYFPFPEEISKEVLQFFFDSGFRRNGNILYRTSCCGCKDCLSYRIPLDQFVPSRNRKKLLKKNSDLKICFESPNLTLEKEILYLRYQRSRYQNFVIEESDQELLEGMRWNLFEYKENSLEMTLSLDGKILCFMILDFASDSLSAVYSVYDPDYPDRSLGSFAILSSILYAKELGMKYFHLGYFLPGHPNMDYKKYWTPAQIREPVSNENRWIETDDFQKRYSDFSW.

It belongs to the R-transferase family. Bpt subfamily.

Its subcellular location is the cytoplasm. The catalysed reaction is N-terminal L-glutamyl-[protein] + L-leucyl-tRNA(Leu) = N-terminal L-leucyl-L-glutamyl-[protein] + tRNA(Leu) + H(+). It carries out the reaction N-terminal L-aspartyl-[protein] + L-leucyl-tRNA(Leu) = N-terminal L-leucyl-L-aspartyl-[protein] + tRNA(Leu) + H(+). Functions in the N-end rule pathway of protein degradation where it conjugates Leu from its aminoacyl-tRNA to the N-termini of proteins containing an N-terminal aspartate or glutamate. In Leptospira interrogans serogroup Icterohaemorrhagiae serovar copenhageni (strain Fiocruz L1-130), this protein is Aspartate/glutamate leucyltransferase.